The following is a 396-amino-acid chain: Tryptophan synthase beta chain (396 aa).

Lysine 86 is subject to N6-(pyridoxal phosphate)lysine.

This sequence belongs to the TrpB family. Tetramer of two alpha and two beta chains. Requires pyridoxal 5'-phosphate as cofactor.

The enzyme catalyses (1S,2R)-1-C-(indol-3-yl)glycerol 3-phosphate + L-serine = D-glyceraldehyde 3-phosphate + L-tryptophan + H2O. Its pathway is amino-acid biosynthesis; L-tryptophan biosynthesis; L-tryptophan from chorismate: step 5/5. Its function is as follows. The beta subunit is responsible for the synthesis of L-tryptophan from indole and L-serine. In Proteus mirabilis (strain HI4320), this protein is Tryptophan synthase beta chain.